Consider the following 192-residue polypeptide: Glycerol-3-phosphate acyltransferase (192 aa).

The next 5 helical transmembrane spans lie at 3-23 (ALFLVIFAYLLGSITFGEVIA), 51-71 (YGVLVFFLDFLKGFIPALIAV), 80-100 (VLTFTGLASVLGHMYPVFFGF), 112-132 (VVFAVSPSVALFSFLVWLGIF), and 149-169 (AFLFLFVAGYPVNVLFMAIVI).

The protein belongs to the PlsY family. As to quaternary structure, probably interacts with PlsX.

The protein resides in the cell inner membrane. It carries out the reaction an acyl phosphate + sn-glycerol 3-phosphate = a 1-acyl-sn-glycero-3-phosphate + phosphate. Its pathway is lipid metabolism; phospholipid metabolism. In terms of biological role, catalyzes the transfer of an acyl group from acyl-phosphate (acyl-PO(4)) to glycerol-3-phosphate (G3P) to form lysophosphatidic acid (LPA). This enzyme utilizes acyl-phosphate as fatty acyl donor, but not acyl-CoA or acyl-ACP. This chain is Glycerol-3-phosphate acyltransferase, found in Aquifex aeolicus (strain VF5).